The chain runs to 498 residues: ATP synthase subunit beta, chloroplastic (498 aa).

Residue 172 to 179 (GGAGVGKT) participates in ATP binding.

The protein belongs to the ATPase alpha/beta chains family. In terms of assembly, F-type ATPases have 2 components, CF(1) - the catalytic core - and CF(0) - the membrane proton channel. CF(1) has five subunits: alpha(3), beta(3), gamma(1), delta(1), epsilon(1). CF(0) has four main subunits: a(1), b(1), b'(1) and c(9-12).

The protein resides in the plastid. It is found in the chloroplast thylakoid membrane. The enzyme catalyses ATP + H2O + 4 H(+)(in) = ADP + phosphate + 5 H(+)(out). In terms of biological role, produces ATP from ADP in the presence of a proton gradient across the membrane. The catalytic sites are hosted primarily by the beta subunits. The sequence is that of ATP synthase subunit beta, chloroplastic from Agapanthus africanus (Lily of the Nile).